The following is a 231-amino-acid chain: Orotidine 5'-phosphate decarboxylase (231 aa).

Substrate-binding positions include Asp11, Lys33, 60 to 69 (DLKFHDIPNT), Thr120, Arg181, Gln190, Gly210, and Arg211. Lys62 acts as the Proton donor in catalysis.

The protein belongs to the OMP decarboxylase family. Type 1 subfamily. In terms of assembly, homodimer.

It catalyses the reaction orotidine 5'-phosphate + H(+) = UMP + CO2. Its pathway is pyrimidine metabolism; UMP biosynthesis via de novo pathway; UMP from orotate: step 2/2. Catalyzes the decarboxylation of orotidine 5'-monophosphate (OMP) to uridine 5'-monophosphate (UMP). In Colwellia psychrerythraea (strain 34H / ATCC BAA-681) (Vibrio psychroerythus), this protein is Orotidine 5'-phosphate decarboxylase.